Consider the following 75-residue polypeptide: UPF0235 protein Ava_3894 (75 aa).

The tract at residues 1-32 (MQKKVKVKPNSKQQKIAEQDDGSLTVHLKSPP) is disordered.

Belongs to the UPF0235 family.

This chain is UPF0235 protein Ava_3894, found in Trichormus variabilis (strain ATCC 29413 / PCC 7937) (Anabaena variabilis).